Reading from the N-terminus, the 207-residue chain is Imidazole glycerol phosphate synthase subunit HisH (207 aa).

Residues 1–206 (MMIVIGYDAG…KEYVYENTAR (206 aa)) enclose the Glutamine amidotransferase type-1 domain. The Nucleophile role is filled by C79. Catalysis depends on residues H181 and E183.

In terms of assembly, heterodimer of HisH and HisF.

It localises to the cytoplasm. It catalyses the reaction 5-[(5-phospho-1-deoxy-D-ribulos-1-ylimino)methylamino]-1-(5-phospho-beta-D-ribosyl)imidazole-4-carboxamide + L-glutamine = D-erythro-1-(imidazol-4-yl)glycerol 3-phosphate + 5-amino-1-(5-phospho-beta-D-ribosyl)imidazole-4-carboxamide + L-glutamate + H(+). The enzyme catalyses L-glutamine + H2O = L-glutamate + NH4(+). Its pathway is amino-acid biosynthesis; L-histidine biosynthesis; L-histidine from 5-phospho-alpha-D-ribose 1-diphosphate: step 5/9. Its function is as follows. IGPS catalyzes the conversion of PRFAR and glutamine to IGP, AICAR and glutamate. The HisH subunit catalyzes the hydrolysis of glutamine to glutamate and ammonia as part of the synthesis of IGP and AICAR. The resulting ammonia molecule is channeled to the active site of HisF. In Streptococcus gordonii (strain Challis / ATCC 35105 / BCRC 15272 / CH1 / DL1 / V288), this protein is Imidazole glycerol phosphate synthase subunit HisH.